Reading from the N-terminus, the 82-residue chain is Small ribosomal subunit protein bS16 (82 aa).

It belongs to the bacterial ribosomal protein bS16 family.

The sequence is that of Small ribosomal subunit protein bS16 from Glaesserella parasuis serovar 5 (strain SH0165) (Haemophilus parasuis).